The chain runs to 333 residues: Ketol-acid reductoisomerase (NADP(+)) (333 aa).

The KARI N-terminal Rossmann domain maps to 1–179 (MFYDDDADLT…GGTRAGVIKT (179 aa)). Residues 22–25 (YGSQ), lysine 45, serine 48, serine 50, and 80–83 (DTAQ) contribute to the NADP(+) site. The active site involves histidine 105. Residue glycine 131 participates in NADP(+) binding. The KARI C-terminal knotted domain maps to 180–325 (TFKDETETDL…KRLRDLMSWV (146 aa)). Residues aspartate 188, glutamate 192, glutamate 224, and glutamate 228 each coordinate Mg(2+). Serine 249 is a binding site for substrate.

This sequence belongs to the ketol-acid reductoisomerase family. Requires Mg(2+) as cofactor.

It catalyses the reaction (2R)-2,3-dihydroxy-3-methylbutanoate + NADP(+) = (2S)-2-acetolactate + NADPH + H(+). The enzyme catalyses (2R,3R)-2,3-dihydroxy-3-methylpentanoate + NADP(+) = (S)-2-ethyl-2-hydroxy-3-oxobutanoate + NADPH + H(+). It participates in amino-acid biosynthesis; L-isoleucine biosynthesis; L-isoleucine from 2-oxobutanoate: step 2/4. It functions in the pathway amino-acid biosynthesis; L-valine biosynthesis; L-valine from pyruvate: step 2/4. Functionally, involved in the biosynthesis of branched-chain amino acids (BCAA). Catalyzes an alkyl-migration followed by a ketol-acid reduction of (S)-2-acetolactate (S2AL) to yield (R)-2,3-dihydroxy-isovalerate. In the isomerase reaction, S2AL is rearranged via a Mg-dependent methyl migration to produce 3-hydroxy-3-methyl-2-ketobutyrate (HMKB). In the reductase reaction, this 2-ketoacid undergoes a metal-dependent reduction by NADPH to yield (R)-2,3-dihydroxy-isovalerate. The chain is Ketol-acid reductoisomerase (NADP(+)) from Mycobacterium avium (strain 104).